Here is a 106-residue protein sequence, read N- to C-terminus: Putative toxin Rv3098A/RVBD_3098A (106 aa).

It belongs to the PemK/MazF family. In terms of assembly, forms a complex with cognate antitoxin Rv3098B/RVBD_3098B.

In terms of biological role, putative toxic component of a possible type II toxin-antitoxin (TA) system. Its toxic effect may be neutralized by cognate antitoxin Rv3098B/RVBD_3098B. In Mycobacterium tuberculosis (strain ATCC 25618 / H37Rv), this protein is Putative toxin Rv3098A/RVBD_3098A.